The sequence spans 398 residues: Carbamoyl phosphate synthase small chain (398 aa).

The interval 1–199 is CPSase; the sequence is MTPAWATEKP…WNEGFGEQAE (199 aa). Residues S54, G251, and G253 each coordinate L-glutamine. In terms of domain architecture, Glutamine amidotransferase type-1 spans 203-391; it reads HVVAIDYGVK…VNLIREKRGE (189 aa). C280 functions as the Nucleophile in the catalytic mechanism. L-glutamine-binding residues include L281, Q284, N322, G324, and F325. Residues H364 and E366 contribute to the active site.

Belongs to the CarA family. In terms of assembly, composed of two chains; the small (or glutamine) chain promotes the hydrolysis of glutamine to ammonia, which is used by the large (or ammonia) chain to synthesize carbamoyl phosphate. Tetramer of heterodimers (alpha,beta)4.

The catalysed reaction is hydrogencarbonate + L-glutamine + 2 ATP + H2O = carbamoyl phosphate + L-glutamate + 2 ADP + phosphate + 2 H(+). It catalyses the reaction L-glutamine + H2O = L-glutamate + NH4(+). It participates in amino-acid biosynthesis; L-arginine biosynthesis; carbamoyl phosphate from bicarbonate: step 1/1. The protein operates within pyrimidine metabolism; UMP biosynthesis via de novo pathway; (S)-dihydroorotate from bicarbonate: step 1/3. In terms of biological role, small subunit of the glutamine-dependent carbamoyl phosphate synthetase (CPSase). CPSase catalyzes the formation of carbamoyl phosphate from the ammonia moiety of glutamine, carbonate, and phosphate donated by ATP, constituting the first step of 2 biosynthetic pathways, one leading to arginine and/or urea and the other to pyrimidine nucleotides. The small subunit (glutamine amidotransferase) binds and cleaves glutamine to supply the large subunit with the substrate ammonia. This Mesorhizobium japonicum (strain LMG 29417 / CECT 9101 / MAFF 303099) (Mesorhizobium loti (strain MAFF 303099)) protein is Carbamoyl phosphate synthase small chain.